Here is a 159-residue protein sequence, read N- to C-terminus: Putative 4-hydroxy-4-methyl-2-oxoglutarate aldolase (159 aa).

Substrate contacts are provided by residues 75 to 78 and arginine 97; that span reads GDQL. Aspartate 98 contributes to the a divalent metal cation binding site.

The protein belongs to the class II aldolase/RraA-like family. In terms of assembly, homotrimer. It depends on a divalent metal cation as a cofactor.

The enzyme catalyses 4-hydroxy-4-methyl-2-oxoglutarate = 2 pyruvate. It catalyses the reaction oxaloacetate + H(+) = pyruvate + CO2. Catalyzes the aldol cleavage of 4-hydroxy-4-methyl-2-oxoglutarate (HMG) into 2 molecules of pyruvate. Also contains a secondary oxaloacetate (OAA) decarboxylase activity due to the common pyruvate enolate transition state formed following C-C bond cleavage in the retro-aldol and decarboxylation reactions. This Laribacter hongkongensis (strain HLHK9) protein is Putative 4-hydroxy-4-methyl-2-oxoglutarate aldolase.